The primary structure comprises 316 residues: Glutathione synthetase (316 aa).

An ATP-grasp domain is found at asparagine 123–glutamate 309. Phenylalanine 149–glycine 206 lines the ATP pocket. Mg(2+)-binding residues include glutamate 280 and asparagine 282.

Belongs to the prokaryotic GSH synthase family. Mg(2+) is required as a cofactor. Requires Mn(2+) as cofactor.

It catalyses the reaction gamma-L-glutamyl-L-cysteine + glycine + ATP = glutathione + ADP + phosphate + H(+). It participates in sulfur metabolism; glutathione biosynthesis; glutathione from L-cysteine and L-glutamate: step 2/2. The chain is Glutathione synthetase from Wigglesworthia glossinidia brevipalpis.